We begin with the raw amino-acid sequence, 328 residues long: Biotin synthase (328 aa).

Positions 53–282 (FHGNRVDLCA…ATTIRYAGGR (230 aa)) constitute a Radical SAM core domain. [4Fe-4S] cluster-binding residues include C71, C75, and C78. Positions 115, 147, 207, and 277 each coordinate [2Fe-2S] cluster.

The protein belongs to the radical SAM superfamily. Biotin synthase family. As to quaternary structure, homodimer. The cofactor is [4Fe-4S] cluster. [2Fe-2S] cluster is required as a cofactor.

It catalyses the reaction (4R,5S)-dethiobiotin + (sulfur carrier)-SH + 2 reduced [2Fe-2S]-[ferredoxin] + 2 S-adenosyl-L-methionine = (sulfur carrier)-H + biotin + 2 5'-deoxyadenosine + 2 L-methionine + 2 oxidized [2Fe-2S]-[ferredoxin]. The protein operates within cofactor biosynthesis; biotin biosynthesis; biotin from 7,8-diaminononanoate: step 2/2. Catalyzes the conversion of dethiobiotin (DTB) to biotin by the insertion of a sulfur atom into dethiobiotin via a radical-based mechanism. The chain is Biotin synthase from Desulforudis audaxviator (strain MP104C).